Here is a 1040-residue protein sequence, read N- to C-terminus: Neprilysin-4 (1040 aa).

Residues 1–27 are disordered; that stretch reads MSRHSQLKLAMPSVHGAPATAPGSPMN. The required for maintaining muscle integrity stretch occupies residues 1–45; sequence MSRHSQLKLAMPSVHGAPATAPGSPMNAKARSVKLGLGVNQRTGR. At 1 to 55 the chain is on the cytoplasmic side; that stretch reads MSRHSQLKLAMPSVHGAPATAPGSPMNAKARSVKLGLGVNQRTGRVQWCPGLTCC. The chain crosses the membrane as a helical; Signal-anchor for type II membrane protein span at residues 56 to 76; the sequence is KMLLLLPVVMLPLTLVLILIM. Residues 77-1040 are Extracellular-facing; the sequence is RLDGMLAALQ…MNPQKKCSVW (964 aa). The Peptidase M13 domain maps to 251–1040; that stretch reads EEGTREGIRM…MNPQKKCSVW (790 aa). 4 disulfide bridges follow: Cys277–Cys1025, Cys285–Cys985, Cys452–Cys700, and Cys909–Cys1037. Asn387, Asn593, Asn723, and Asn819 each carry an N-linked (GlcNAc...) asparagine glycan. Zn(2+) is bound at residue His872. Residue Glu873 is part of the active site. His876 provides a ligand contact to Zn(2+). Asn916 is a glycosylation site (N-linked (GlcNAc...) asparagine). Glu934 is a binding site for Zn(2+). Asp938 acts as the Proton donor in catalysis. N-linked (GlcNAc...) asparagine glycosylation occurs at Asn969.

The protein belongs to the peptidase M13 family. As to quaternary structure, interacts (via intracellular domain) with the putative carbohydrate kinase CG3534. The cofactor is Zn(2+). In terms of tissue distribution, expressed in the gonads and testes of adults, and the adult and larval brain (at protein level). In embryos, expressed in the pericardial, muscle founder and glia cells (at protein level). In stage 12 embryos, expressed in specific dorsal muscle founder cells such as DA1 and DO2, and also in the certain pericardial progenitor cells where expression persists throughout embryogenesis. Expressed in the glia cells of the embryonic, larval and adult central nervous system. Expressed in the somatic muscles of larvae, pupae and adults. Isoform A: Detected in the male abdomen (at protein level). Isoform B: Not detected in the male or female abdomen (at protein level).

It is found in the cell membrane. The protein resides in the sarcoplasmic reticulum. Its subcellular location is the cytoplasm. The catalysed reaction is Preferential cleavage of polypeptides between hydrophobic residues, particularly with Phe or Tyr at P1'.. Its function is as follows. Metalloendoprotease which cleaves peptides at the amino side of hydrophobic residues - such as the hormones Akh and Dh31, and the neuropeptides Allatostatins (AST1, AST2, AST3 and AST4), Crz, Drosulfakinins (DSK-I and DSK-II), Lk, sNPF and the tachykinin peptides TK-1, TK-2, TK-4 and TK-5. Functions in female fertility, memory formation and may also act in regulating insulin signaling and food intake. Likely to be involved in controlling feeding behavior and the expression of insulin-like peptides by cleaving various regulatory peptides that include certain Drosulfakinins, Allatostatins and tachykinin peptides. Required in females for normal patterns of egg laying and hatching. Required in the dorsal paired medial neurons for the proper formation of long-term (LTM) and middle-term memories (MTM). Also required in the mushroom body neurons where it functions redundantly with neprilysins Nep2 and Nep3, in normal LTM formation. Cleaves angiotensin-1 and tachykinin neuropeptide substance P. Functions in maintaining muscle integrity, possibly independently of its endopeptidase activity. This is Neprilysin-4 from Drosophila melanogaster (Fruit fly).